A 1328-amino-acid chain; its full sequence is MDQKILSLAAEKTADKLQEFLQTLREGDLTNLLQNQAVKGKVAGALLRAIFKGSPCSEEAGTLRRRKIYTCCIQLVESGDLQKEIASEIIGLLMLEAHHFPGPLLVELANEFISAVREGSLVNGKSLELLPIILTALATKKENLAYGKGVLSGEECKKQLINTLCSGRWDQQYVIQLTSMFKDVPLTAEEVEFVVEKALSMFSKMNLQEIPPLVYQLLVLSSKGSRKSVLEGIIAFFSALDKQHNEEQSGDELLDVVTVPSGELRHVEGTIILHIVFAIKLDYELGRELVKHLKVGQQGDSNNNLSPFSIALLLSVTRIQRFQDQVLDLLKTSVVKSFKDLQLLQGSKFLQNLVPHRSYVSTMILEVVKNSVHSWDHVTQGLVELGFILMDSYGPKKVLDGKTIETSPSLSRMPNQHACKLGANILLETFKIHEMIRQEILEQVLNRVVTRASSPISHFLDLLSNIVMYAPLVLQSCSSKVTEAFDYLSFLPLQTVQRLLKAVQPLLKVSMSMRDCLILVLRKAMFANQLDARKSAVAGFLLLLKNFKVLGSLSSSQCSQSLSVSQVHVDVHSHYNSVANETFCLEIMDSLRRCLSQQADVRLMLYEGFYDVLRRNSQLANSVMQTLLSQLKQFYEPKPDLLPPLKLEACILTQGDKISLQEPLDYLLCCIQHCLAWYKNTVIPLQQGEEEEEEEEAFYEDLDDILESITNRMIKSELEDFELDKSADFSQSTSIGIKNNICAFLVMGVCEVLIEYNFSISSFSKNRFEDILSLFMCYKKLSDILNEKAGKAKTKMANKTSDSLLSMKFVSSLLTALFRDSIQSHQESLSVLRSSNEFMRYAVNVALQKVQQLKETGHVSGPDGQNPEKIFQNLCDITRVLLWRYTSIPTSVEESGKKEKGKSISLLCLEGLQKIFSAVQQFYQPKIQQFLRALDVTDKEGEEREDADVSVTQRTAFQIRQFQRSLLNLLSSQEEDFNSKEALLLVTVLTSLSKLLEPSSPQFVQMLSWTSKICKENSREDALFCKSLMNLLFSLHVSYKSPVILLRDLSQDIHGHLGDIDQDVEVEKTNHFAIVNLRTAAPTVCLLVLSQAEKVLEEVDWLITKLKGQVSQETLSEEASSQATLPNQPVEKAIIMQLGTLLTFFHELVQTALPSGSCVDTLLKDLCKMYTTLTALVRYYLQVCQSSGGIPKNMEKLVKLSGSHLTPLCYSFISYVQNKSKSLNYTGEKKEKPAAVATAMARVLRETKPIPNLIFAIEQYEKFLIHLSKKSKVNLMQHMKLSTSRDFKIKGNILDMVLREDGEDENEEGTASEHGGQNKEPAKKKRKK.

Ser407 is modified (phosphoserine). A Glycyl lysine isopeptide (Lys-Gly) (interchain with G-Cter in ubiquitin) cross-link involves residue Lys523. Residues Ser556 and Ser730 each carry the phosphoserine modification. The residue at position 952 (Thr952) is a Phosphothreonine. Position 1121 is a phosphoserine (Ser1121). Positions 1300 to 1328 (EDGEDENEEGTASEHGGQNKEPAKKKRKK) are disordered. Positions 1301-1310 (DGEDENEEGT) are enriched in acidic residues.

This sequence belongs to the Fanconi anemia group I protein family. In terms of assembly, homodimer. Part of a FANCI-FANCD2 heterodimeric complex that binds and scans dsDNA for DNA damage. Interacts with FANCL. Interacts with MTMR15/FAN1. Interacts with POLN. Interacts with UBL5; the interaction promotes FANCI homodimerization. Monoubiquitinated by FANCL on Lys-523 during S phase and upon genotoxic stress. Deubiquitinated by USP1 as cells enter G2/M, or once DNA repair is completed. Monoubiquitination requires the FANCA-FANCB-FANCC-FANCE-FANCF-FANCG-FANCM complex. Ubiquitination is required for binding to chromatin, DNA repair, and normal cell cycle progression. Monoubiquitination is stimulated by DNA-binding. Post-translationally, phosphorylated in response to DNA damage by ATM and/or ATR. Phosphorylation of FANCI promotes ubiquitination of FANCD2, which prevents DNA release from the FANCI-FANCD2 complex.

The protein resides in the nucleus. The protein localises to the cytoplasm. In terms of biological role, plays an essential role in the repair of DNA double-strand breaks by homologous recombination and in the repair of interstrand DNA cross-links (ICLs) by promoting FANCD2 monoubiquitination by FANCL and participating in recruitment to DNA repair sites. The FANCI-FANCD2 complex binds and scans double-stranded DNA (dsDNA) for DNA damage; this complex stalls at DNA junctions between double-stranded DNA and single-stranded DNA. Participates in S phase and G2 phase checkpoint activation upon DNA damage. In Homo sapiens (Human), this protein is Fanconi anemia group I protein (FANCI).